Here is an 851-residue protein sequence, read N- to C-terminus: mRNA-capping enzyme catalytic subunit (851 aa).

A triphosphatase-guanylyltransferase region spans residues 1–544; it reads MDKYISKTPL…EEEKLADIAA (544 aa). Mg(2+)-binding residues include Glu-38, Glu-40, Glu-199, and Glu-201. Residue Lys-266 is the N6-GMP-lysine intermediate of the active site. 554–555 provides a ligand contact to S-adenosyl-L-methionine; that stretch reads LN. An mRNA cap 0 methyltransferase domain is found at 565–850; that stretch reads RVRGALGILS…HYMVYVFSKE (286 aa). 574-575 is an mRNA binding site; sequence SN. Residues Lys-578, Asp-603, Asp-625, and 683-685 contribute to the S-adenosyl-L-methionine site; that span reads QFA.

In the N-terminal section; belongs to the dsDNA virus mRNA guanylyltransferase family. It in the C-terminal section; belongs to the class I-like SAM-binding methyltransferase superfamily. mRNA cap 0 methyltransferase family. As to quaternary structure, heterodimer of a catalytic and a regulatory subunit. Intrinsic methyltransferase activity of the catalytic subunit is weak and needs to be stimulated 30- to 50-fold by the regulatory subunit, which is itself catalytically inert. Requires Mg(2+) as cofactor.

The protein localises to the virion. The catalysed reaction is a 5'-end triphospho-ribonucleoside in mRNA + H2O = a 5'-end diphospho-ribonucleoside in mRNA + phosphate + H(+). It carries out the reaction a 5'-end diphospho-ribonucleoside in mRNA + GTP + H(+) = a 5'-end (5'-triphosphoguanosine)-ribonucleoside in mRNA + diphosphate. It catalyses the reaction a 5'-end (5'-triphosphoguanosine)-ribonucleoside in mRNA + S-adenosyl-L-methionine = a 5'-end (N(7)-methyl 5'-triphosphoguanosine)-ribonucleoside in mRNA + S-adenosyl-L-homocysteine. Its function is as follows. Catalytic subunit of the mRNA capping enzyme which catalyzes three enzymatic reactions: the 5' triphosphate end of the pre-mRNA is hydrolyzed to a diphosphate by RNA 5' triphosphatase; the diphosphate RNA end is capped with GMP by RNA guanylyltransferase and the GpppN cap is methylated by RNA (guanine-N7) methyltransferase. Heterodimeric mRNA capping enzyme catalyzes the linkage of a N7-methyl-guanosine moiety to the first transcribed nucleotide (cap 0 structure), whereas the polymerase associated VP39 is responsible for a second methylation at the 2'-O position of the ribose (cap 1 structure). Functionally, the heterodimeric enzyme is also involved in early viral gene transcription termination and intermediate viral gene transcription initiation. Early gene transcription termination requires the termination factor VTF, the DNA-dependent ATPase NPH-I and the Rap94 subunit of the viral RNA polymerase, as well as the presence of a specific termination motif. Binds, together with RAP94, to the termination motif 5'-UUUUUNU-3' in the nascent early mRNA. This is mRNA-capping enzyme catalytic subunit from Fowlpox virus (strain NVSL) (FPV).